Consider the following 48-residue polypeptide: Delta-actitoxin-Bcg1b (48 aa).

3 cysteine pairs are disulfide-bonded: C4–C45, C6–C35, and C28–C46.

It belongs to the sea anemone sodium channel inhibitory toxin family. Type I subfamily.

It is found in the secreted. It localises to the nematocyst. In terms of biological role, binds to the sodium channels Nav1.1/SCN1A (EC(50)=165 nM), Nav1.5/SCN5A (EC(50)=103 nM) and Nav1.6/SCN8A (EC(50)=133 nM), thereby delaying their inactivation. Also inhibits Nav1.2/SCN2A, Nav1.3/SCN3A, and Nav1.4/SCN4A, but to a lesser extent. Inhibits Nav1.5 differently from isoforms Nav1.1 and Nav1.6. In Nav1.5 the effect consists in a right-shift of inactivation; whereas in both Nav1.1 and Nav1.6 the effect consists in an incomplete inactivation. This Bunodosoma cangicum (Sea anemone) protein is Delta-actitoxin-Bcg1b.